We begin with the raw amino-acid sequence, 372 residues long: Queuine tRNA-ribosyltransferase (372 aa).

D89 functions as the Proton acceptor in the catalytic mechanism. Residues 89–93 (DSGGF), D143, Q185, and G212 contribute to the substrate site. The interval 243–249 (GVGKPED) is RNA binding. The active-site Nucleophile is the D262. Positions 267–271 (TRNAR) are RNA binding; important for wobble base 34 recognition. Zn(2+) is bound by residues C300, C302, C305, and H331.

The protein belongs to the queuine tRNA-ribosyltransferase family. As to quaternary structure, homodimer. Within each dimer, one monomer is responsible for RNA recognition and catalysis, while the other monomer binds to the replacement base PreQ1. Requires Zn(2+) as cofactor.

It carries out the reaction 7-aminomethyl-7-carbaguanine + guanosine(34) in tRNA = 7-aminomethyl-7-carbaguanosine(34) in tRNA + guanine. The protein operates within tRNA modification; tRNA-queuosine biosynthesis. Its function is as follows. Catalyzes the base-exchange of a guanine (G) residue with the queuine precursor 7-aminomethyl-7-deazaguanine (PreQ1) at position 34 (anticodon wobble position) in tRNAs with GU(N) anticodons (tRNA-Asp, -Asn, -His and -Tyr). Catalysis occurs through a double-displacement mechanism. The nucleophile active site attacks the C1' of nucleotide 34 to detach the guanine base from the RNA, forming a covalent enzyme-RNA intermediate. The proton acceptor active site deprotonates the incoming PreQ1, allowing a nucleophilic attack on the C1' of the ribose to form the product. After dissociation, two additional enzymatic reactions on the tRNA convert PreQ1 to queuine (Q), resulting in the hypermodified nucleoside queuosine (7-(((4,5-cis-dihydroxy-2-cyclopenten-1-yl)amino)methyl)-7-deazaguanosine). The sequence is that of Queuine tRNA-ribosyltransferase from Chromohalobacter salexigens (strain ATCC BAA-138 / DSM 3043 / CIP 106854 / NCIMB 13768 / 1H11).